Here is a 242-residue protein sequence, read N- to C-terminus: uncharacterized protein (242 aa).

The segment covering 1-11 (MNFEAASAPSQ) has biased composition (low complexity). Residues 1–45 (MNFEAASAPSQQPSPTPAPKTEEPKENGGSEQQADQPENSKKDDV) are disordered.

The protein to U.parvum UU171.

This is an uncharacterized protein from Ureaplasma parvum serovar 3 (strain ATCC 700970).